We begin with the raw amino-acid sequence, 574 residues long: MEAINLTILVIGVLFLISIVATLISSRIGAPILLVFLIIGMLAGEQGLGGITFNNPQVAFLIGSIALVIILFDGGMRTHPERFRVALAPAAMLATLGVVVTCTVTGLAAAWILGLHWLQGLLLGAILSSTDAAAVFSIFQSRGIRIKDRVASTLEIESGSNDPMAVMLTITLVGVLAEYTALDWSVLIVFLKQAIIGGAVGYGAGRLFVFLCRKLPLSFAFFPLMAVACCISVYAVTTQFEGSGFLAVYLMGYFVGNARLPQVLYILRVHDGLAWLSQIVMFLMLGLLVVPSQLLDHLLPALAIAGVLIFIARPLAVLLSLIPFHFPAKDQLFISWVGLRGAVPIILALFPWLAGVPDEHLYFNVAFVIVIVSLVFQGWSISPVARWLKLEVPKESGPDQTMPLDAIASNEVIEVVSFTLKGDSPMLDKQWQDFTVPHSAEFLGVIRDGEWLLSRDNPVFKLKDSVLVLCKMADVPDISTVLASAASSRTMTASDFFGDFVLNAQITLDELDAFYSITLPEHESHVTLADYITERFHRRVVVGDQVKLDALVLTVRQLDDHGNVKLVGIKPSDS.

13 helical membrane-spanning segments follow: residues 4-24 (INLT…ATLI), 28-48 (IGAP…EQGL), 56-76 (PQVA…DGGM), 85-105 (VALA…CTVT), 117-139 (WLQG…FSIF), 170-190 (ITLV…LIVF), 191-211 (LKQA…FVFL), 216-236 (PLSF…VYAV), 244-264 (GFLA…PQVL), 272-292 (GLAW…VVPS), 302-322 (LAIA…LSLI), 332-352 (LFIS…LFPW), and 361-381 (LYFN…GWSI). One can recognise an RCK C-terminal domain in the interval 402–484 (MPLDAIASNE…VPDISTVLAS (83 aa)).

Belongs to the monovalent cation:proton antiporter 1 (CPA1) transporter (TC 2.A.36) family.

The protein localises to the cell inner membrane. In terms of biological role, k(+)/H(+) antiporter that extrudes potassium in exchange for external protons. Can also catalyze NH(4)(+)/H(+) antiport. Could have weak activity with Na(+). This is K(+)/H(+) antiporter NhaP (nhaP) from Alkalimonas amylolytica.